The following is a 622-amino-acid chain: Low affinity potassium transport system protein Kup (622 aa).

A run of 12 helical transmembrane segments spans residues L9–L29, V49–L69, V103–I123, P137–I157, V165–L185, V213–A233, W247–L267, P276–A296, I337–F357, L363–T383, F396–L416, and L419–T439.

Belongs to the HAK/KUP transporter (TC 2.A.72) family.

It localises to the cell inner membrane. It catalyses the reaction K(+)(in) + H(+)(in) = K(+)(out) + H(+)(out). Responsible for the low-affinity transport of potassium into the cell. Likely operates as a K(+):H(+) symporter. The protein is Low affinity potassium transport system protein Kup of Salmonella paratyphi B (strain ATCC BAA-1250 / SPB7).